The following is a 460-amino-acid chain: G-protein coupled receptor 22 (460 aa).

At 1-74 (MESMPSSLTH…YPVSFQVSLT (74 aa)) the chain is on the cytoplasmic side. The helical transmembrane segment at 75–95 (GFLMLEIVLGLSSNLTVLALY) threads the bilayer. The Extracellular segment spans residues 96 to 114 (CMKSNLVSSVSNIVTMNLH). Residues 115-135 (VLDVLVCVGCIPLTIVVVLLP) traverse the membrane as a helical segment. Residues 136-144 (LEGNNALIC) lie on the Cytoplasmic side of the membrane. The helical transmembrane segment at 145–165 (CFHEACVSFASVATAANVLAI) threads the bilayer. The Extracellular portion of the chain corresponds to 166–185 (TLDRYDISVRPANRVLTMGR). The chain crosses the membrane as a helical span at residues 186-206 (AVALLGSIWALSFFSFLVPFI). At 207 to 235 (EEGFFSQAGNERNQTEAEEPSNEYYTELG) the chain is on the cytoplasmic side. Residues 236-256 (LYYHLLAQIPIFFFTAVVMLV) traverse the membrane as a helical segment. Over 257–343 (TYYKILQALN…ERQKRVFRMS (87 aa)) the chain is Extracellular. Residues 276–286 (VPKKKPRKKKT) show a composition bias toward basic residues. The segment at 276 to 309 (VPKKKPRKKKTISMTSTQPESTDASQSSAGRNAP) is disordered. Residues 287-305 (ISMTSTQPESTDASQSSAG) are compositionally biased toward polar residues. The helical transmembrane segment at 344–364 (LLIISTFLLCWTPITVLNTVI) threads the bilayer. The Cytoplasmic portion of the chain corresponds to 365–377 (LSVGPSNFTVRLR). A helical transmembrane segment spans residues 378 to 398 (LGFLVMAYGTTIFHPLLYAFT). The Extracellular segment spans residues 399 to 460 (RQKFQKVLKS…QKCLSSEDVE (62 aa)).

Belongs to the G-protein coupled receptor 1 family.

The protein resides in the cell membrane. Its function is as follows. Orphan G-protein coupled receptor that regulates cilia length and structure in the Kupffer's vesicle leading to the left-right asymmetry development by establishing a directional fluid flow. The protein is G-protein coupled receptor 22 (gpr22a) of Danio rerio (Zebrafish).